The primary structure comprises 748 residues: Acyl-coenzyme A oxidase (748 aa).

The protein belongs to the acyl-CoA oxidase family. Requires FAD as cofactor.

The protein localises to the peroxisome. It catalyses the reaction a 2,3-saturated acyl-CoA + O2 = a (2E)-enoyl-CoA + H2O2. The protein operates within lipid metabolism; peroxisomal fatty acid beta-oxidation. This chain is Acyl-coenzyme A oxidase (POX1), found in Candida glabrata (strain ATCC 2001 / BCRC 20586 / JCM 3761 / NBRC 0622 / NRRL Y-65 / CBS 138) (Yeast).